A 192-amino-acid polypeptide reads, in one-letter code: A-type ATP synthase subunit E (192 aa).

Residues 1 to 66 form a disordered region; that stretch reads MSLDTVVEDI…QERDQKLSSA (66 aa). Residues 8–26 are compositionally biased toward basic and acidic residues; the sequence is EDIRDEARARADEIRSEGE. Over residues 27–49 the composition is skewed to acidic residues; the sequence is ERAEEIIDEAEREADDIVDEAER. The span at 50–66 shows a compositional bias: basic and acidic residues; it reads EAERKISQERDQKLSSA.

This sequence belongs to the V-ATPase E subunit family. Has multiple subunits with at least A(3), B(3), C, D, E, F, H, I and proteolipid K(x).

The protein resides in the cell membrane. In terms of biological role, component of the A-type ATP synthase that produces ATP from ADP in the presence of a proton gradient across the membrane. The sequence is that of A-type ATP synthase subunit E from Natronomonas pharaonis (strain ATCC 35678 / DSM 2160 / CIP 103997 / JCM 8858 / NBRC 14720 / NCIMB 2260 / Gabara) (Halobacterium pharaonis).